The primary structure comprises 611 residues: Dihydroxy-acid dehydratase (611 aa).

D82 contributes to the Mg(2+) binding site. C123 is a binding site for [2Fe-2S] cluster. 2 residues coordinate Mg(2+): D124 and K125. An N6-carboxylysine modification is found at K125. Residue C192 participates in [2Fe-2S] cluster binding. E489 contributes to the Mg(2+) binding site. The active-site Proton acceptor is S515. Residues E565–G574 show a composition bias toward basic and acidic residues. The interval E565–E586 is disordered.

The protein belongs to the IlvD/Edd family. As to quaternary structure, homodimer. Requires [2Fe-2S] cluster as cofactor. Mg(2+) is required as a cofactor.

The enzyme catalyses (2R)-2,3-dihydroxy-3-methylbutanoate = 3-methyl-2-oxobutanoate + H2O. It catalyses the reaction (2R,3R)-2,3-dihydroxy-3-methylpentanoate = (S)-3-methyl-2-oxopentanoate + H2O. It functions in the pathway amino-acid biosynthesis; L-isoleucine biosynthesis; L-isoleucine from 2-oxobutanoate: step 3/4. The protein operates within amino-acid biosynthesis; L-valine biosynthesis; L-valine from pyruvate: step 3/4. Functionally, functions in the biosynthesis of branched-chain amino acids. Catalyzes the dehydration of (2R,3R)-2,3-dihydroxy-3-methylpentanoate (2,3-dihydroxy-3-methylvalerate) into 2-oxo-3-methylpentanoate (2-oxo-3-methylvalerate) and of (2R)-2,3-dihydroxy-3-methylbutanoate (2,3-dihydroxyisovalerate) into 2-oxo-3-methylbutanoate (2-oxoisovalerate), the penultimate precursor to L-isoleucine and L-valine, respectively. The chain is Dihydroxy-acid dehydratase from Parabacteroides distasonis (strain ATCC 8503 / DSM 20701 / CIP 104284 / JCM 5825 / NCTC 11152).